The primary structure comprises 492 residues: Cell death protein 6 (492 aa).

Residues 19–29 (GNNINGEGSSS) are compositionally biased toward low complexity. The interval 19–38 (GNNINGEGSSSPSTSAPQVK) is disordered. The PID domain maps to 55–215 (INGHVEYVAR…YILKKKIVEL (161 aa)). 2 disordered regions span residues 241-385 (TGPP…STAA) and 464-492 (TGDL…NLKQ). Residues 244 to 268 (PIYPGLGPPALPLSPMPQGPPPNIP) are compositionally biased toward pro residues. The segment covering 300 to 312 (ASPSVSPASTSPS) has biased composition (low complexity). Residues 313 to 333 (GPAPSIPPPRPPALAPPPPVA) are compositionally biased toward pro residues. Over residues 373-383 (FDPRAGEKKST) the composition is skewed to basic and acidic residues.

It belongs to the ced-6 family. Homodimer. Interacts with ced-1. Interacts with E3 ubiquitin-protein ligase trim-21. In terms of tissue distribution, detected in gonadal sheath cells.

The protein resides in the cytoplasm. May function as an adapter protein in a pathway that mediates recognition and phagocytosis of apoptotic cells during normal development. Promotes engulfment of cells at both early and late stages of apoptosis. Required for actin reorganization around apoptotic cells. Plays a role in protecting dopaminergic neurons from oxidative stress-induced degeneration. Mediates recruitment of E3 ubiquitin-protein ligase trim-21 to the apoptotic cell surface which promotes ubiquitination and degradation of ced-1. This chain is Cell death protein 6, found in Caenorhabditis elegans.